Here is a 635-residue protein sequence, read N- to C-terminus: Threonine--tRNA ligase (635 aa).

Residues 1 to 61 form the TGS domain; the sequence is MINISLSDGS…ENNCKLRILT (61 aa). The catalytic stretch occupies residues 242 to 533; that stretch reads DHRKLGRELD…LIEEYAGCFP (292 aa). Zn(2+) is bound by residues Cys-333, His-384, and His-510.

The protein belongs to the class-II aminoacyl-tRNA synthetase family. In terms of assembly, homodimer. Requires Zn(2+) as cofactor.

It is found in the cytoplasm. It catalyses the reaction tRNA(Thr) + L-threonine + ATP = L-threonyl-tRNA(Thr) + AMP + diphosphate + H(+). Its function is as follows. Catalyzes the attachment of threonine to tRNA(Thr) in a two-step reaction: L-threonine is first activated by ATP to form Thr-AMP and then transferred to the acceptor end of tRNA(Thr). Also edits incorrectly charged L-seryl-tRNA(Thr). The chain is Threonine--tRNA ligase from Rickettsia canadensis (strain McKiel).